A 43-amino-acid chain; its full sequence is uncharacterized protein (43 aa).

This is an uncharacterized protein from Sinorhizobium fredii (strain NBRC 101917 / NGR234).